A 197-amino-acid polypeptide reads, in one-letter code: Nucleoid occlusion factor SlmA (197 aa).

One can recognise an HTH tetR-type domain in the interval 7–67 (INRREHILQC…GLIEFIEDAI (61 aa)). Positions 30–49 (TTAKLAAEVGVSEAALYRHF) form a DNA-binding region, H-T-H motif. Residues 110–130 (ALLGENERLRSRIDVLFAKIE) adopt a coiled-coil conformation.

It belongs to the nucleoid occlusion factor SlmA family. In terms of assembly, homodimer. Interacts with FtsZ.

The protein resides in the cytoplasm. It is found in the nucleoid. Its function is as follows. Required for nucleoid occlusion (NO) phenomenon, which prevents Z-ring formation and cell division over the nucleoid. Acts as a DNA-associated cell division inhibitor that binds simultaneously chromosomal DNA and FtsZ, and disrupts the assembly of FtsZ polymers. SlmA-DNA-binding sequences (SBS) are dispersed on non-Ter regions of the chromosome, preventing FtsZ polymerization at these regions. The polypeptide is Nucleoid occlusion factor SlmA (Shewanella frigidimarina (strain NCIMB 400)).